The chain runs to 193 residues: Cysteine and glycine-rich protein 1 (193 aa).

In terms of domain architecture, LIM zinc-binding 1 spans 10 to 61; the sequence is CGVCQKTVYFAEEVQCEGNSFHKSCFLCMVCKKNLDSTTVAVHGEEIYCKSC. Positions 64–69 match the Nuclear localization signal motif; sequence KKYGPK. Serine 81 bears the Phosphoserine mark. Lysine 84 is modified (N6-acetyllysine). Lysine 91 participates in a covalent cross-link: Glycyl lysine isopeptide (Lys-Gly) (interchain with G-Cter in SUMO2). 4 positions are modified to N6-acetyllysine: lysine 112, lysine 131, lysine 137, and lysine 161. Residues 119-170 form the LIM zinc-binding 2 domain; that stretch reads CPRCSQAVYAAEKVIGAGKSWHKSCFRCAKCGKGLESTTLADKDGEIYCKGC. Serine 192 is subject to Phosphoserine.

In terms of assembly, interacts with ASCC1; ASCC2 and TRIP4.

It localises to the nucleus. Functionally, could play a role in neuronal development. The sequence is that of Cysteine and glycine-rich protein 1 (Csrp1) from Rattus norvegicus (Rat).